The following is a 480-amino-acid chain: MEYEVVIGLEVHAELATKSKIFCSCTTEFGGEPNTHCCPICTGMPGVLPVLNKKAVEYAIMAGLATNCQIARYSKQDRKNYFYPDLPKAYQISQYDLPLCYNGYIDIEVNGQKKRIGIKRIHIEEDAGKLLHDQWEEGSLVDFNRCGVPLIEIVTEPDLRSSEETRIFLEKLKAILQYTEVSDCKMQEGSLRVDVNLSVRPKGSKEFGTRTEMKNLNSFRSVVRAIEYEARRQIEVLESGGVVVQETRRWDDPKGISLSMRTKEEAHDYRYFPEPDLPPIVVDDSWIEEIRKRIPELPDQKKERYIKEYGLPEYDAGVLTSSKAIANYFEECIKYTQNIKAASNWMMGEIMRILNDKGLEPEEINNIKIKPNQLASLINLVDNKTISNTIAKQVFEEMFETGKDPEVIVKEKGLVQITDRNVILEAVKQAIANNPKSVEDYKNGKDKAFGFLVGQVMKITKGKANPQLVNEILREELEKI.

Belongs to the GatB/GatE family. GatB subfamily. As to quaternary structure, heterotrimer of A, B and C subunits.

The enzyme catalyses L-glutamyl-tRNA(Gln) + L-glutamine + ATP + H2O = L-glutaminyl-tRNA(Gln) + L-glutamate + ADP + phosphate + H(+). The catalysed reaction is L-aspartyl-tRNA(Asn) + L-glutamine + ATP + H2O = L-asparaginyl-tRNA(Asn) + L-glutamate + ADP + phosphate + 2 H(+). Functionally, allows the formation of correctly charged Asn-tRNA(Asn) or Gln-tRNA(Gln) through the transamidation of misacylated Asp-tRNA(Asn) or Glu-tRNA(Gln) in organisms which lack either or both of asparaginyl-tRNA or glutaminyl-tRNA synthetases. The reaction takes place in the presence of glutamine and ATP through an activated phospho-Asp-tRNA(Asn) or phospho-Glu-tRNA(Gln). The polypeptide is Aspartyl/glutamyl-tRNA(Asn/Gln) amidotransferase subunit B (Caldicellulosiruptor bescii (strain ATCC BAA-1888 / DSM 6725 / KCTC 15123 / Z-1320) (Anaerocellum thermophilum)).